The chain runs to 101 residues: UPF0060 membrane protein ACIAD1364 (101 aa).

3 helical membrane passes run 24 to 44, 50 to 70, and 79 to 99; these read WLWL…TLHP, IYAA…RFID, and IWGG…PQGL.

Belongs to the UPF0060 family.

Its subcellular location is the cell inner membrane. This is UPF0060 membrane protein ACIAD1364 from Acinetobacter baylyi (strain ATCC 33305 / BD413 / ADP1).